Consider the following 388-residue polypeptide: Acetate kinase (388 aa).

N14 contributes to the Mg(2+) binding site. Residue K21 coordinates ATP. R80 provides a ligand contact to substrate. Catalysis depends on D137, which acts as the Proton donor/acceptor. Residues 197-201 (HLGNG), 271-273 (DFR), and 319-323 (GIGEH) each bind ATP. E373 is a binding site for Mg(2+).

Belongs to the acetokinase family. Homodimer. It depends on Mg(2+) as a cofactor. Requires Mn(2+) as cofactor.

Its subcellular location is the cytoplasm. It carries out the reaction acetate + ATP = acetyl phosphate + ADP. The protein operates within metabolic intermediate biosynthesis; acetyl-CoA biosynthesis; acetyl-CoA from acetate: step 1/2. In terms of biological role, catalyzes the formation of acetyl phosphate from acetate and ATP. Can also catalyze the reverse reaction. The protein is Acetate kinase of Mycobacterium marinum (strain ATCC BAA-535 / M).